Here is a 320-residue protein sequence, read N- to C-terminus: Sucrose operon repressor (320 aa).

The HTH lacI-type domain maps to 1 to 57 (MVAKLTDVAKLAGVSPTTVSRVINRKGYLSEKTITKVQAAMKTLGYKPNNLARSLQG). The H-T-H motif DNA-binding region spans 5 to 24 (LTDVAKLAGVSPTTVSRVIN).

In terms of biological role, negative regulator of scrB expression. In Streptococcus mutans serotype c (strain ATCC 700610 / UA159), this protein is Sucrose operon repressor (scrR).